Reading from the N-terminus, the 347-residue chain is MSDDPTTPELESESESELAFEGALRPRTLAEFVGQAKVRGQLQLLLTAARMQERTADHILLAGPPGLGKTTLAMIVAHESDRPLRLSSGPAIQHAGDLAALLSSLTPGEVLFIDEIHRMARTAEEMLYLAMEDFRIDIMVGKGAGATSIPLDLAPFTLVGATTRSGLLPNPLRDRFGFTAHLEFYDEGELAQVLARAAVMLEFEIDGEALAEIAGRCRGTPRIANRLLRRVRDYALVHGGRADIAAVHAALELYDVNELGLDRLDRAVLHAILERFEGGPVGLNTLAVSVGEEPETIESVVEPFLVRIGLLSRTPRGRVATVAAWRHFGLAAPRQGHSQPPSLMDDL.

Positions 1 to 185 (MSDDPTTPEL…FGFTAHLEFY (185 aa)) are large ATPase domain (RuvB-L). Residues L24, R25, G66, K69, T70, T71, 132 to 134 (EDF), R175, Y185, and R222 contribute to the ATP site. T70 contacts Mg(2+). The segment at 186 to 255 (DEGELAQVLA…AVHAALELYD (70 aa)) is small ATPAse domain (RuvB-S). The interval 258–347 (ELGLDRLDRA…SQPPSLMDDL (90 aa)) is head domain (RuvB-H). The DNA site is built by R313 and R318.

Belongs to the RuvB family. Homohexamer. Forms an RuvA(8)-RuvB(12)-Holliday junction (HJ) complex. HJ DNA is sandwiched between 2 RuvA tetramers; dsDNA enters through RuvA and exits via RuvB. An RuvB hexamer assembles on each DNA strand where it exits the tetramer. Each RuvB hexamer is contacted by two RuvA subunits (via domain III) on 2 adjacent RuvB subunits; this complex drives branch migration. In the full resolvosome a probable DNA-RuvA(4)-RuvB(12)-RuvC(2) complex forms which resolves the HJ.

Its subcellular location is the cytoplasm. The catalysed reaction is ATP + H2O = ADP + phosphate + H(+). The RuvA-RuvB-RuvC complex processes Holliday junction (HJ) DNA during genetic recombination and DNA repair, while the RuvA-RuvB complex plays an important role in the rescue of blocked DNA replication forks via replication fork reversal (RFR). RuvA specifically binds to HJ cruciform DNA, conferring on it an open structure. The RuvB hexamer acts as an ATP-dependent pump, pulling dsDNA into and through the RuvAB complex. RuvB forms 2 homohexamers on either side of HJ DNA bound by 1 or 2 RuvA tetramers; 4 subunits per hexamer contact DNA at a time. Coordinated motions by a converter formed by DNA-disengaged RuvB subunits stimulates ATP hydrolysis and nucleotide exchange. Immobilization of the converter enables RuvB to convert the ATP-contained energy into a lever motion, pulling 2 nucleotides of DNA out of the RuvA tetramer per ATP hydrolyzed, thus driving DNA branch migration. The RuvB motors rotate together with the DNA substrate, which together with the progressing nucleotide cycle form the mechanistic basis for DNA recombination by continuous HJ branch migration. Branch migration allows RuvC to scan DNA until it finds its consensus sequence, where it cleaves and resolves cruciform DNA. The protein is Holliday junction branch migration complex subunit RuvB of Leifsonia xyli subsp. xyli (strain CTCB07).